The sequence spans 291 residues: Ribosomal RNA small subunit methyltransferase H (291 aa).

Residues 36–38 (GGH), Asp-55, Ala-90, Asp-102, and Gln-109 each bind S-adenosyl-L-methionine.

This sequence belongs to the methyltransferase superfamily. RsmH family.

Its subcellular location is the cytoplasm. It carries out the reaction cytidine(1402) in 16S rRNA + S-adenosyl-L-methionine = N(4)-methylcytidine(1402) in 16S rRNA + S-adenosyl-L-homocysteine + H(+). In terms of biological role, specifically methylates the N4 position of cytidine in position 1402 (C1402) of 16S rRNA. The sequence is that of Ribosomal RNA small subunit methyltransferase H from Thermosipho africanus (strain TCF52B).